The sequence spans 97 residues: Co-chaperonin GroES (97 aa).

It belongs to the GroES chaperonin family. Heptamer of 7 subunits arranged in a ring. Interacts with the chaperonin GroEL.

The protein resides in the cytoplasm. Together with the chaperonin GroEL, plays an essential role in assisting protein folding. The GroEL-GroES system forms a nano-cage that allows encapsulation of the non-native substrate proteins and provides a physical environment optimized to promote and accelerate protein folding. GroES binds to the apical surface of the GroEL ring, thereby capping the opening of the GroEL channel. The sequence is that of Co-chaperonin GroES from Baumannia cicadellinicola subsp. Homalodisca coagulata.